Here is a 378-residue protein sequence, read N- to C-terminus: Flagellin E (378 aa).

2 coiled-coil regions span residues 98–139 (QSAN…KLLN) and 311–339 (MQNRFQHAISNLDNVHENLAASNSRIKDA).

Belongs to the bacterial flagellin family. As to quaternary structure, heteromer of multiple flagellin subunits including FlaA, FlaB, FlaC, FlaD and FlaE.

It is found in the secreted. Its subcellular location is the bacterial flagellum. Functionally, flagellin is the subunit protein which polymerizes to form the filaments of bacterial flagella. FlaE is not essential for flagellar synthesis and motility. In Vibrio cholerae serotype O1 (strain ATCC 39541 / Classical Ogawa 395 / O395), this protein is Flagellin E (flaE).